The sequence spans 326 residues: Ribosomal RNA small subunit methyltransferase H (326 aa).

S-adenosyl-L-methionine is bound by residues 35-37 (GGY), D53, F80, D101, and Q108. Residues 260-306 (EGVSRHLPQASNAGAGNPPPSFQAVSRRAVKPLDAETRVNPRSRSAR) form a disordered region.

This sequence belongs to the methyltransferase superfamily. RsmH family.

The protein localises to the cytoplasm. It carries out the reaction cytidine(1402) in 16S rRNA + S-adenosyl-L-methionine = N(4)-methylcytidine(1402) in 16S rRNA + S-adenosyl-L-homocysteine + H(+). Functionally, specifically methylates the N4 position of cytidine in position 1402 (C1402) of 16S rRNA. The protein is Ribosomal RNA small subunit methyltransferase H of Rhodospirillum rubrum (strain ATCC 11170 / ATH 1.1.1 / DSM 467 / LMG 4362 / NCIMB 8255 / S1).